Reading from the N-terminus, the 582-residue chain is ATP-dependent lipid A-core flippase (582 aa).

The next 5 helical transmembrane spans lie at 16-36 (LWPT…ALIL), 64-84 (LLWM…TSYI), 153-173 (IIGL…ILVV), 253-273 (PIIQ…ASFP), and 275-295 (VMDS…IALM). Positions 28–310 (IVAGIALILN…LTNVNAQFQR (283 aa)) constitute an ABC transmembrane type-1 domain. An ABC transporter domain is found at 342–578 (LEFRNVTFTY…HGVYAQLHKM (237 aa)). Residue 376 to 383 (GRSGSGKS) coordinates ATP.

Belongs to the ABC transporter superfamily. Lipid exporter (TC 3.A.1.106) family. As to quaternary structure, homodimer.

The protein resides in the cell inner membrane. The enzyme catalyses ATP + H2O + lipid A-core oligosaccharideSide 1 = ADP + phosphate + lipid A-core oligosaccharideSide 2.. In terms of biological role, involved in lipopolysaccharide (LPS) biosynthesis. Translocates lipid A-core from the inner to the outer leaflet of the inner membrane. Transmembrane domains (TMD) form a pore in the inner membrane and the ATP-binding domain (NBD) is responsible for energy generation. This Salmonella paratyphi A (strain ATCC 9150 / SARB42) protein is ATP-dependent lipid A-core flippase.